The chain runs to 85 residues: Toxin To9 (85 aa).

A signal peptide spans 1–19 (MNYSTLIAVASLLTAGTES). The region spanning 21–81 (KDGYPVKEGD…AAIKGYGRCR (61 aa)) is the LCN-type CS-alpha/beta domain. Intrachain disulfides connect C31-C80, C35-C56, C42-C63, and C46-C65. P82 is modified (proline amide).

This sequence belongs to the long (4 C-C) scorpion toxin superfamily. Sodium channel inhibitor family. Alpha subfamily. As to expression, expressed by the venom gland.

The protein localises to the secreted. Alpha toxins bind voltage-independently at site-3 of sodium channels (Nav) and inhibit the inactivation of the activated channels, thereby blocking neuronal transmission. This is Toxin To9 from Tityus obscurus (Amazonian scorpion).